Reading from the N-terminus, the 107-residue chain is MSPTAYAIVETCGKQYWFQPGRYYDINFINAEPGDKIIFHRVLWLQHQQLLIGRPFLPNTHVEATILQHLKSKKVLVYHMRSKKKTRKKYGARQLLTRIYIHPFHGS.

It belongs to the bacterial ribosomal protein bL21 family. As to quaternary structure, part of the 50S ribosomal subunit.

Its subcellular location is the plastid. The protein localises to the chloroplast. In terms of biological role, this protein binds to 23S rRNA. The sequence is that of Large ribosomal subunit protein bL21c from Cyanidioschyzon merolae (strain NIES-3377 / 10D) (Unicellular red alga).